Consider the following 617-residue polypeptide: uncharacterized protein (617 aa).

The B12-binding N-terminal domain occupies 33-134 (TEDDFRGEKF…FXNATKQKGS (102 aa)). Residues E84, 146 to 150 (GDVHD), H149, S194, T198, and A251 contribute to the methylcob(III)alamin site. In terms of domain architecture, B12-binding spans 136–272 (NGKVVIATVK…NPEGRAALWE (137 aa)). Positions 288-617 (SKPLRKQLSI…MMKWLGVAMK (330 aa)) constitute an AdoMet activation domain. Residues D337, R528, and 583–584 (YF) contribute to the S-adenosyl-L-methionine site.

Belongs to the vitamin-B12 dependent methionine synthase family.

This is an uncharacterized protein from Haemophilus influenzae (strain ATCC 51907 / DSM 11121 / KW20 / Rd).